Here is a 186-residue protein sequence, read N- to C-terminus: Adenine phosphoribosyltransferase (186 aa).

The protein belongs to the purine/pyrimidine phosphoribosyltransferase family. As to quaternary structure, homodimer.

Its subcellular location is the cytoplasm. It carries out the reaction AMP + diphosphate = 5-phospho-alpha-D-ribose 1-diphosphate + adenine. It functions in the pathway purine metabolism; AMP biosynthesis via salvage pathway; AMP from adenine: step 1/1. In terms of biological role, catalyzes a salvage reaction resulting in the formation of AMP, that is energically less costly than de novo synthesis. This Xanthomonas campestris pv. campestris (strain 8004) protein is Adenine phosphoribosyltransferase.